The sequence spans 451 residues: tRNA-2-methylthio-N(6)-dimethylallyladenosine synthase (451 aa).

Positions 18–134 (ARVYLETYGC…LPNLLDLAES (117 aa)) constitute an MTTase N-terminal domain. [4Fe-4S] cluster contacts are provided by cysteine 27, cysteine 63, cysteine 97, cysteine 170, cysteine 174, and cysteine 177. The region spanning 156–386 (RKNGHSAFLA…IALQQKISAE (231 aa)) is the Radical SAM core domain. Positions 389 to 451 (RNDIGNTHEV…TSATLIGNAL (63 aa)) constitute a TRAM domain.

This sequence belongs to the methylthiotransferase family. MiaB subfamily. As to quaternary structure, monomer. Requires [4Fe-4S] cluster as cofactor.

It localises to the cytoplasm. The catalysed reaction is N(6)-dimethylallyladenosine(37) in tRNA + (sulfur carrier)-SH + AH2 + 2 S-adenosyl-L-methionine = 2-methylsulfanyl-N(6)-dimethylallyladenosine(37) in tRNA + (sulfur carrier)-H + 5'-deoxyadenosine + L-methionine + A + S-adenosyl-L-homocysteine + 2 H(+). Catalyzes the methylthiolation of N6-(dimethylallyl)adenosine (i(6)A), leading to the formation of 2-methylthio-N6-(dimethylallyl)adenosine (ms(2)i(6)A) at position 37 in tRNAs that read codons beginning with uridine. In Chloroherpeton thalassium (strain ATCC 35110 / GB-78), this protein is tRNA-2-methylthio-N(6)-dimethylallyladenosine synthase.